The sequence spans 507 residues: RNA-splicing ligase RtcB homolog (507 aa).

Residues Asp121, Cys124, His229, His261, and His355 each contribute to the Mn(2+) site. GMP is bound at residue Asn228 to Glu232. Residues His355–Asn356, Gly404–Met407, Ser411, His430–Gly433, and Lys506 contribute to the GMP site. His430 serves as the catalytic GMP-histidine intermediate.

Belongs to the RtcB family. As to quaternary structure, catalytic component of the tRNA-splicing ligase complex. It depends on Mn(2+) as a cofactor.

The enzyme catalyses a 3'-end 3'-phospho-ribonucleotide-RNA + a 5'-end dephospho-ribonucleoside-RNA + GTP = a ribonucleotidyl-ribonucleotide-RNA + GMP + diphosphate. It carries out the reaction a 3'-end 2',3'-cyclophospho-ribonucleotide-RNA + a 5'-end dephospho-ribonucleoside-RNA + GTP + H2O = a ribonucleotidyl-ribonucleotide-RNA + GMP + diphosphate + H(+). Its function is as follows. Catalytic subunit of the tRNA-splicing ligase complex that acts by directly joining spliced tRNA halves to mature-sized tRNAs by incorporating the precursor-derived splice junction phosphate into the mature tRNA as a canonical 3',5'-phosphodiester. May act as an RNA ligase with broad substrate specificity, and may function toward other RNAs. The sequence is that of RNA-splicing ligase RtcB homolog from Branchiostoma floridae (Florida lancelet).